A 186-amino-acid chain; its full sequence is Probable GTP-binding protein EngB (186 aa).

The EngB-type G domain maps to 18–186; the sequence is DKKEICFIGR…LKKLIGSVIL (169 aa). GTP contacts are provided by residues 26–33, 52–56, 69–72, 135–138, and 166–168; these read GRSNVGKS, GRTQL, DLPG, NKAD, and VSA. 2 residues coordinate Mg(2+): S33 and T54.

It belongs to the TRAFAC class TrmE-Era-EngA-EngB-Septin-like GTPase superfamily. EngB GTPase family. Mg(2+) serves as cofactor.

Necessary for normal cell division and for the maintenance of normal septation. This is Probable GTP-binding protein EngB from Malacoplasma penetrans (strain HF-2) (Mycoplasma penetrans).